Consider the following 88-residue polypeptide: Apolipoprotein C-I (88 aa).

An N-terminal signal peptide occupies residues 1 to 26; sequence MRLILSLPVLAVVLAMVLEGPAPAQA.

The protein belongs to the apolipoprotein C1 family.

The protein localises to the secreted. In terms of biological role, inhibitor of lipoprotein binding to the low density lipoprotein (LDL) receptor, LDL receptor-related protein, and very low density lipoprotein (VLDL) receptor. Associates with high density lipoproteins (HDL) and the triacylglycerol-rich lipoproteins in the plasma and makes up about 10% of the protein of the VLDL and 2% of that of HDL. Appears to interfere directly with fatty acid uptake and is also the major plasma inhibitor of cholesteryl ester transfer protein (CETP). Binds free fatty acids and reduces their intracellular esterification. Modulates the interaction of APOE with beta-migrating VLDL and inhibits binding of beta-VLDL to the LDL receptor-related protein. The chain is Apolipoprotein C-I (APOC1) from Eidolon helvum (Straw-colored fruit bat).